A 432-amino-acid chain; its full sequence is Trigger factor (432 aa).

Residues 161 to 246 (EDRVTIDFTG…LKKVEERELP (86 aa)) form the PPIase FKBP-type domain.

The protein belongs to the FKBP-type PPIase family. Tig subfamily.

It is found in the cytoplasm. The enzyme catalyses [protein]-peptidylproline (omega=180) = [protein]-peptidylproline (omega=0). Involved in protein export. Acts as a chaperone by maintaining the newly synthesized protein in an open conformation. Functions as a peptidyl-prolyl cis-trans isomerase. In Salmonella typhi, this protein is Trigger factor.